Here is an 88-residue protein sequence, read N- to C-terminus: Small cysteine-rich outer membrane protein OmcA (88 aa).

Positions 1–18 are cleaved as a signal peptide; the sequence is MKKTALLAALCSVVSLSS. Cys-19 carries N-palmitoyl cysteine lipidation. A lipid anchor (S-diacylglycerol cysteine) is attached at Cys-19.

In terms of assembly, part of a disulfide cross-linked outer membrane complex (COMC) composed of the major outer membrane porin (MOMP), the small cysteine-rich protein (OmcA) and the large cysteine-rich periplasmic protein (OmcB).

It localises to the cell outer membrane. Functionally, in elementary bodies (EBs, the infectious stage, which is able to survive outside the host cell) provides the structural integrity of the outer envelope through disulfide cross-links with the large cysteine-rich periplasmic protein and the major outer membrane porin. It has been described in publications as the Sarkosyl-insoluble COMC (Chlamydia outer membrane complex), and serves as the functional equivalent of peptidoglycan. The chain is Small cysteine-rich outer membrane protein OmcA (omcA) from Chlamydia muridarum (strain MoPn / Nigg).